The primary structure comprises 236 residues: Peptidase E (236 aa).

Active-site charge relay system residues include Ser-122, Asp-137, and His-159.

Belongs to the peptidase S51 family.

It localises to the cytoplasm. The enzyme catalyses Dipeptidase E catalyzes the hydrolysis of dipeptides Asp-|-Xaa. It does not act on peptides with N-terminal Glu, Asn or Gln, nor does it cleave isoaspartyl peptides.. Functionally, hydrolyzes dipeptides containing N-terminal aspartate residues. May play a role in allowing the cell to use peptide aspartate to spare carbon otherwise required for the synthesis of the aspartate family of amino acids. This is Peptidase E from Shewanella sp. (strain MR-4).